Reading from the N-terminus, the 166-residue chain is NAD(P)H-quinone oxidoreductase subunit I, chloroplastic (166 aa).

2 consecutive 4Fe-4S ferredoxin-type domains span residues 55-84 (GRIH…VDWK) and 95-124 (LNYS…MTEE). [4Fe-4S] cluster is bound by residues C64, C67, C70, C74, C104, C107, C110, and C114.

The protein belongs to the complex I 23 kDa subunit family. As to quaternary structure, NDH is composed of at least 16 different subunits, 5 of which are encoded in the nucleus. [4Fe-4S] cluster serves as cofactor.

It is found in the plastid. The protein resides in the chloroplast thylakoid membrane. It carries out the reaction a plastoquinone + NADH + (n+1) H(+)(in) = a plastoquinol + NAD(+) + n H(+)(out). It catalyses the reaction a plastoquinone + NADPH + (n+1) H(+)(in) = a plastoquinol + NADP(+) + n H(+)(out). Its function is as follows. NDH shuttles electrons from NAD(P)H:plastoquinone, via FMN and iron-sulfur (Fe-S) centers, to quinones in the photosynthetic chain and possibly in a chloroplast respiratory chain. The immediate electron acceptor for the enzyme in this species is believed to be plastoquinone. Couples the redox reaction to proton translocation, and thus conserves the redox energy in a proton gradient. This Polymnia canadensis (White-flowered leaf-cup) protein is NAD(P)H-quinone oxidoreductase subunit I, chloroplastic.